We begin with the raw amino-acid sequence, 369 residues long: Putative protein FAM10A5 (369 aa).

The tract at residues 38–98 (MGGKVPPATQ…IEPDTDAPQE (61 aa)) is disordered. Over residues 49-73 (AKSEENTKEEKPDSKKVEEDLKADE) the composition is skewed to basic and acidic residues. Residues 89 to 98 (IEPDTDAPQE) show a composition bias toward acidic residues. TPR repeat units lie at residues 114 to 147 (ANDK…NPRL), 149 to 181 (ILYA…NPDS), and 183 to 215 (QPYK…DYDE). Over residues 256–272 (KAQEEQERAQREEEARR) the composition is skewed to basic and acidic residues. The tract at residues 256–300 (KAQEEQERAQREEEARRQSGAHYGPFPGGFPGGMPGNFPGGMPGM) is disordered. A compositionally biased stretch (gly residues) spans 281-300 (FPGGFPGGMPGNFPGGMPGM). Positions 319 to 358 (DPEALAAMQDPEVMVAFQDVAQNPANMSKYQSNPKVMNLI) constitute an STI1 domain. Ser346 carries the post-translational modification Phosphoserine. 2 positions are modified to N6-acetyllysine: Lys353 and Lys360.

It belongs to the FAM10 family.

It localises to the cytoplasm. The polypeptide is Putative protein FAM10A5 (ST13P5) (Homo sapiens (Human)).